We begin with the raw amino-acid sequence, 319 residues long: Tetrahydromethanopterin S-methyltransferase subunit H (319 aa).

This sequence belongs to the MtrH family. As to quaternary structure, the complex is composed of 8 subunits; MtrA, MtrB, MtrC, MtrD, MtrE, MtrF, MtrG and MtrH.

It carries out the reaction 5-methyl-5,6,7,8-tetrahydromethanopterin + coenzyme M + 2 Na(+)(in) = 5,6,7,8-tetrahydromethanopterin + methyl-coenzyme M + 2 Na(+)(out). The protein operates within one-carbon metabolism; methanogenesis from CO(2); methyl-coenzyme M from 5,10-methylene-5,6,7,8-tetrahydromethanopterin: step 2/2. Functionally, part of a complex that catalyzes the formation of methyl-coenzyme M and tetrahydromethanopterin from coenzyme M and methyl-tetrahydromethanopterin. This is an energy-conserving, sodium-ion translocating step. MtrH catalyzes the transfer of the methyl group from methyl-tetrahydromethanopterin to the corrinoid prosthetic group of MtrA. This is Tetrahydromethanopterin S-methyltransferase subunit H from Methanococcus maripaludis (strain DSM 14266 / JCM 13030 / NBRC 101832 / S2 / LL).